Here is a 95-residue protein sequence, read N- to C-terminus: Small ribosomal subunit protein bS16 (95 aa).

It belongs to the bacterial ribosomal protein bS16 family.

This chain is Small ribosomal subunit protein bS16, found in Thermotoga neapolitana (strain ATCC 49049 / DSM 4359 / NBRC 107923 / NS-E).